The sequence spans 129 residues: Large ribosomal subunit protein bL20 (129 aa).

Positions 1–17 (MARVKRSVNAHKKRRSV) are enriched in basic residues. Residues 1–29 (MARVKRSVNAHKKRRSVLKASKGYRGQRS) form a disordered region.

The protein belongs to the bacterial ribosomal protein bL20 family.

Its function is as follows. Binds directly to 23S ribosomal RNA and is necessary for the in vitro assembly process of the 50S ribosomal subunit. It is not involved in the protein synthesizing functions of that subunit. This chain is Large ribosomal subunit protein bL20, found in Mycobacterium ulcerans (strain Agy99).